The sequence spans 245 residues: Peroxisome biogenesis protein 19-2 (245 aa).

Residues 17–106 (ALDDFKDLNL…LSSKQQPTGS (90 aa)) are disordered. Composition is skewed to basic and acidic residues over residues 33-44 (VKKEEGDKKETE) and 71-92 (AKED…ETVK). Residues 96–105 (SLSSKQQPTG) are compositionally biased toward polar residues. Position 242 is a cysteine methyl ester (Cys242). Cys242 is lipidated: S-farnesyl cysteine. Residues 243–245 (CVM) constitute a propeptide, removed in mature form.

This sequence belongs to the peroxin-19 family. In terms of assembly, dimer. Interacts with PEX10 (via C-terminus). May be farnesylated. As to expression, expressed in roots, leaves, flowers, siliques and stems. Highest expression in roots and leaves.

Its subcellular location is the cytoplasm. It is found in the peroxisome membrane. Its function is as follows. Contributes to morphology determination of peroxisomes, but not to import of peroxisomal matrix proteins. Required for proper post-translational import and stabilization of peroxisomal membrane proteins (PMPs). Acts as a cytosolic import receptor for PMPs and delivers them to the docking factor PEX3 at the peroxisomal membrane for subsequent insertion into the membrane. Acts as a chaperone in stabilizing or maintaining PMPs in the lipid bilayer. The sequence is that of Peroxisome biogenesis protein 19-2 (PEX19-2) from Arabidopsis thaliana (Mouse-ear cress).